Reading from the N-terminus, the 115-residue chain is Large ribosomal subunit protein uL22 (115 aa).

Belongs to the universal ribosomal protein uL22 family. Part of the 50S ribosomal subunit.

Its function is as follows. This protein binds specifically to 23S rRNA; its binding is stimulated by other ribosomal proteins, e.g. L4, L17, and L20. It is important during the early stages of 50S assembly. It makes multiple contacts with different domains of the 23S rRNA in the assembled 50S subunit and ribosome. Functionally, the globular domain of the protein is located near the polypeptide exit tunnel on the outside of the subunit, while an extended beta-hairpin is found that lines the wall of the exit tunnel in the center of the 70S ribosome. The chain is Large ribosomal subunit protein uL22 from Lactococcus lactis subsp. lactis (strain IL1403) (Streptococcus lactis).